The primary structure comprises 44 residues: Cytochrome b559 subunit beta (44 aa).

A helical membrane pass occupies residues 19-35 (WLAVHTLGVPTVFFLGA). Histidine 23 is a heme binding site.

Belongs to the PsbE/PsbF family. As to quaternary structure, heterodimer of an alpha subunit and a beta subunit. PSII is composed of 1 copy each of membrane proteins PsbA, PsbB, PsbC, PsbD, PsbE, PsbF, PsbH, PsbI, PsbJ, PsbK, PsbL, PsbM, PsbT, PsbX, PsbY, PsbZ, Psb30/Ycf12, peripheral proteins PsbO, CyanoQ (PsbQ), PsbU, PsbV and a large number of cofactors. It forms dimeric complexes. Heme b serves as cofactor.

The protein resides in the cellular thylakoid membrane. Its function is as follows. This b-type cytochrome is tightly associated with the reaction center of photosystem II (PSII). PSII is a light-driven water:plastoquinone oxidoreductase that uses light energy to abstract electrons from H(2)O, generating O(2) and a proton gradient subsequently used for ATP formation. It consists of a core antenna complex that captures photons, and an electron transfer chain that converts photonic excitation into a charge separation. This is Cytochrome b559 subunit beta from Trichodesmium erythraeum (strain IMS101).